The chain runs to 256 residues: Pimeloyl-[acyl-carrier protein] methyl ester esterase (256 aa).

The AB hydrolase-1 domain occupies 15–242 (HLVLLHGWGL…AAHAPFISHP (228 aa)). Residues W22, 82–83 (SL), and 143–147 (FLALQ) each bind substrate. The active-site Nucleophile is the S82. Residues D207 and H235 contribute to the active site. H235 serves as a coordination point for substrate.

Belongs to the AB hydrolase superfamily. Carboxylesterase BioH family. As to quaternary structure, monomer.

The protein localises to the cytoplasm. The enzyme catalyses 6-carboxyhexanoyl-[ACP] methyl ester + H2O = 6-carboxyhexanoyl-[ACP] + methanol + H(+). The protein operates within cofactor biosynthesis; biotin biosynthesis. Its function is as follows. The physiological role of BioH is to remove the methyl group introduced by BioC when the pimeloyl moiety is complete. It allows to synthesize pimeloyl-ACP via the fatty acid synthetic pathway through the hydrolysis of the ester bonds of pimeloyl-ACP esters. The chain is Pimeloyl-[acyl-carrier protein] methyl ester esterase from Escherichia coli O7:K1 (strain IAI39 / ExPEC).